The following is a 279-amino-acid chain: Digeranylgeranylglyceryl phosphate synthase (279 aa).

9 helical membrane-spanning segments follow: residues 16–36 (LIAG…LPPI), 40–60 (LLIF…NDYF), 77–99 (GALS…ILIA), 104–121 (FEAF…YLYA), 124–144 (LKPQ…ITPI), 146–166 (GAIA…AFLV), 192–212 (IVWG…ATII), 220–240 (AGIG…LWAA), and 259–279 (LKIA…TKGV).

Belongs to the UbiA prenyltransferase family. DGGGP synthase subfamily. Requires Mg(2+) as cofactor.

It is found in the cell membrane. The enzyme catalyses sn-3-O-(geranylgeranyl)glycerol 1-phosphate + (2E,6E,10E)-geranylgeranyl diphosphate = 2,3-bis-O-(geranylgeranyl)-sn-glycerol 1-phosphate + diphosphate. Its pathway is membrane lipid metabolism; glycerophospholipid metabolism. Prenyltransferase that catalyzes the transfer of the geranylgeranyl moiety of geranylgeranyl diphosphate (GGPP) to the C2 hydroxyl of (S)-3-O-geranylgeranylglyceryl phosphate (GGGP). This reaction is the second ether-bond-formation step in the biosynthesis of archaeal membrane lipids. This chain is Digeranylgeranylglyceryl phosphate synthase, found in Thermococcus sibiricus (strain DSM 12597 / MM 739).